The chain runs to 1107 residues: Dynein axonemal assembly factor 1 homolog (1107 aa).

LRR repeat units lie at residues 34–56 (HLND…EEYV), 57–78 (GLKC…EYQT), 79–100 (ELKC…DSCK), 101–122 (QLDT…GHDI), 125–146 (VLNT…DHLR), and 150–171 (FVSV…KILG). The LRRCT domain occupies 184–223 (NPVVNEIPSYRKTLILECKNLTYLDTRPVFDRDRACAEAW). Disordered stretches follow at residues 258-281 (HRGD…KASK), 428-487 (NESP…TLNV), 500-608 (ESKD…LEKE), 780-810 (KEEP…EHEQ), 834-855 (SSED…AEED), and 1070-1107 (AAHA…DNCD). Over residues 428–437 (NESPLTSPSF) the composition is skewed to polar residues. The segment covering 446–459 (EEIEPTDVEEEQQI) has biased composition (acidic residues). The span at 500–512 (ESKDGELISKVES) shows a compositional bias: basic and acidic residues. The segment covering 531–544 (DNSESEPTDITNED) has biased composition (acidic residues). Over residues 549 to 560 (SSSVSVTSSTDS) the composition is skewed to low complexity. Positions 581 to 597 (NYRQDSTTSTDSENEVS) are enriched in polar residues. Basic and acidic residues predominate over residues 801 to 810 (LEVHSSEHEQ). Acidic residues predominate over residues 844-855 (DSSESSDSAEED). Residues 1083–1097 (VESKPVEIDGTKEET) are compositionally biased toward basic and acidic residues. The segment covering 1098–1107 (VDSELADNCD) has biased composition (acidic residues).

The protein belongs to the DNAAF1 family.

The protein resides in the cell projection. The protein localises to the cilium. Functionally, cilium-specific protein required for cilia structures. The sequence is that of Dynein axonemal assembly factor 1 homolog from Aedes aegypti (Yellowfever mosquito).